Here is a 311-residue protein sequence, read N- to C-terminus: Porphobilinogen deaminase (311 aa).

Cysteine 243 is modified (S-(dipyrrolylmethanemethyl)cysteine).

This sequence belongs to the HMBS family. In terms of assembly, monomer. Requires dipyrromethane as cofactor.

The catalysed reaction is 4 porphobilinogen + H2O = hydroxymethylbilane + 4 NH4(+). It functions in the pathway porphyrin-containing compound metabolism; protoporphyrin-IX biosynthesis; coproporphyrinogen-III from 5-aminolevulinate: step 2/4. Tetrapolymerization of the monopyrrole PBG into the hydroxymethylbilane pre-uroporphyrinogen in several discrete steps. The chain is Porphobilinogen deaminase from Blochmanniella floridana.